A 315-amino-acid chain; its full sequence is Porphobilinogen deaminase (315 aa).

An S-(dipyrrolylmethanemethyl)cysteine modification is found at C238.

The protein belongs to the HMBS family. Monomer. Dipyrromethane serves as cofactor.

It carries out the reaction 4 porphobilinogen + H2O = hydroxymethylbilane + 4 NH4(+). It functions in the pathway porphyrin-containing compound metabolism; protoporphyrin-IX biosynthesis; coproporphyrinogen-III from 5-aminolevulinate: step 2/4. In terms of biological role, tetrapolymerization of the monopyrrole PBG into the hydroxymethylbilane pre-uroporphyrinogen in several discrete steps. In Albidiferax ferrireducens (strain ATCC BAA-621 / DSM 15236 / T118) (Rhodoferax ferrireducens), this protein is Porphobilinogen deaminase.